A 512-amino-acid polypeptide reads, in one-letter code: Glutathione-binding protein GsiB (512 aa).

Residues 1 to 26 (MARAVHRSGLVALGIATALMASCAFA) form the signal peptide.

This sequence belongs to the bacterial solute-binding protein 5 family. In terms of assembly, the complex is composed of two ATP-binding proteins (GsiA), two transmembrane proteins (GsiC and GsiD) and a solute-binding protein (GsiB).

Its subcellular location is the periplasm. Its function is as follows. Part of the ABC transporter complex GsiABCD involved in glutathione import. Binds glutathione. This Escherichia coli O157:H7 protein is Glutathione-binding protein GsiB.